Here is a 242-residue protein sequence, read N- to C-terminus: Glucosamine-6-phosphate deaminase (242 aa).

Aspartate 67 serves as the catalytic Proton acceptor; for enolization step. Asparagine 136 (for ring-opening step) is an active-site residue. Histidine 138 acts as the Proton acceptor; for ring-opening step in catalysis. Catalysis depends on glutamate 143, which acts as the For ring-opening step.

It belongs to the glucosamine/galactosamine-6-phosphate isomerase family. NagB subfamily.

It catalyses the reaction alpha-D-glucosamine 6-phosphate + H2O = beta-D-fructose 6-phosphate + NH4(+). It participates in amino-sugar metabolism; N-acetylneuraminate degradation; D-fructose 6-phosphate from N-acetylneuraminate: step 5/5. In terms of biological role, catalyzes the reversible isomerization-deamination of glucosamine 6-phosphate (GlcN6P) to form fructose 6-phosphate (Fru6P) and ammonium ion. The protein is Glucosamine-6-phosphate deaminase of Clostridium beijerinckii (strain ATCC 51743 / NCIMB 8052) (Clostridium acetobutylicum).